Reading from the N-terminus, the 152-residue chain is Putative RING finger protein 157L (152 aa).

An RING-type zinc finger spans residues 111–146; the sequence is CVVCYENEICIKIQPCNHFVVCKSCFNRLNTCPMCR.

This sequence belongs to the IIV-6 157L family.

The sequence is that of Putative RING finger protein 157L from Invertebrate iridescent virus 6 (IIV-6).